The primary structure comprises 264 residues: L-aspartate dehydrogenase (264 aa).

Ala-120 and Asn-186 together coordinate NAD(+). The active site involves His-216.

It belongs to the L-aspartate dehydrogenase family.

The enzyme catalyses L-aspartate + NADP(+) + H2O = oxaloacetate + NH4(+) + NADPH + H(+). It catalyses the reaction L-aspartate + NAD(+) + H2O = oxaloacetate + NH4(+) + NADH + H(+). Its pathway is cofactor biosynthesis; NAD(+) biosynthesis; iminoaspartate from L-aspartate (dehydrogenase route): step 1/1. In terms of biological role, specifically catalyzes the NAD or NADP-dependent dehydrogenation of L-aspartate to iminoaspartate. This chain is L-aspartate dehydrogenase, found in Serratia proteamaculans (strain 568).